Consider the following 322-residue polypeptide: Phosphatidylserine decarboxylase proenzyme (322 aa).

Residues Asp90, His147, and Ser254 each act as charge relay system; for autoendoproteolytic cleavage activity in the active site. The active-site Schiff-base intermediate with substrate; via pyruvic acid; for decarboxylase activity is Ser254. Ser254 carries the pyruvic acid (Ser); by autocatalysis modification. The tract at residues 293–322 (PDAEPAPLPAEEIEAEHDASPLVDDKKDQV) is disordered. Positions 308–322 (EHDASPLVDDKKDQV) are enriched in basic and acidic residues.

This sequence belongs to the phosphatidylserine decarboxylase family. PSD-B subfamily. Prokaryotic type I sub-subfamily. Heterodimer of a large membrane-associated beta subunit and a small pyruvoyl-containing alpha subunit. Pyruvate serves as cofactor. Post-translationally, is synthesized initially as an inactive proenzyme. Formation of the active enzyme involves a self-maturation process in which the active site pyruvoyl group is generated from an internal serine residue via an autocatalytic post-translational modification. Two non-identical subunits are generated from the proenzyme in this reaction, and the pyruvate is formed at the N-terminus of the alpha chain, which is derived from the carboxyl end of the proenzyme. The autoendoproteolytic cleavage occurs by a canonical serine protease mechanism, in which the side chain hydroxyl group of the serine supplies its oxygen atom to form the C-terminus of the beta chain, while the remainder of the serine residue undergoes an oxidative deamination to produce ammonia and the pyruvoyl prosthetic group on the alpha chain. During this reaction, the Ser that is part of the protease active site of the proenzyme becomes the pyruvoyl prosthetic group, which constitutes an essential element of the active site of the mature decarboxylase.

The protein localises to the cell membrane. The catalysed reaction is a 1,2-diacyl-sn-glycero-3-phospho-L-serine + H(+) = a 1,2-diacyl-sn-glycero-3-phosphoethanolamine + CO2. The protein operates within phospholipid metabolism; phosphatidylethanolamine biosynthesis; phosphatidylethanolamine from CDP-diacylglycerol: step 2/2. Functionally, catalyzes the formation of phosphatidylethanolamine (PtdEtn) from phosphatidylserine (PtdSer). The polypeptide is Phosphatidylserine decarboxylase proenzyme (Escherichia coli (strain 55989 / EAEC)).